We begin with the raw amino-acid sequence, 186 residues long: Large ribosomal subunit protein uL22 (186 aa).

The disordered stretch occupies residues 159–186 (KAAENEPAKKKLSKKKLQRQKEKMMRNE). The span at 177–186 (RQKEKMMRNE) shows a compositional bias: basic and acidic residues.

The protein belongs to the universal ribosomal protein uL22 family.

The chain is Large ribosomal subunit protein uL22 (RpL17) from Aedes albopictus (Asian tiger mosquito).